A 239-amino-acid polypeptide reads, in one-letter code: Protein GrpE (239 aa).

Disordered stretches follow at residues 1–54 (MIEN…ELKN) and 208–239 (SMGP…SEDV). Residues 19-42 (QDNALENVSSAQELTTENNELSSQ) are compositionally biased toward polar residues. Residues 43–53 (KTEEINTEELK) show a composition bias toward basic and acidic residues. The segment covering 228–239 (DIDSEENTSEDV) has biased composition (acidic residues).

The protein belongs to the GrpE family. In terms of assembly, homodimer.

It localises to the cytoplasm. Its function is as follows. Participates actively in the response to hyperosmotic and heat shock by preventing the aggregation of stress-denatured proteins, in association with DnaK and GrpE. It is the nucleotide exchange factor for DnaK and may function as a thermosensor. Unfolded proteins bind initially to DnaJ; upon interaction with the DnaJ-bound protein, DnaK hydrolyzes its bound ATP, resulting in the formation of a stable complex. GrpE releases ADP from DnaK; ATP binding to DnaK triggers the release of the substrate protein, thus completing the reaction cycle. Several rounds of ATP-dependent interactions between DnaJ, DnaK and GrpE are required for fully efficient folding. This is Protein GrpE from Prochlorococcus marinus (strain AS9601).